The sequence spans 215 residues: Polysialic acid O-acetyltransferase (215 aa).

Acetyl-CoA is bound by residues 119 to 121 (DMH), R148, K154, S166, 171 to 172 (YK), and K190.

The protein belongs to the transferase hexapeptide repeat family. Homotrimer.

It catalyses the reaction [(2-&gt;6)-alpha-D-glucosyl-(1-&gt;4)-N-acetyl-alpha-D-neuraminosyl](n) + n acetyl-CoA = [(2-&gt;6)-alpha-D-glucosyl-(1-&gt;4)-N,7-O-diacetyl-alpha-D-neuraminosyl](n) + n CoA. The enzyme catalyses [(2-&gt;6)-alpha-D-glucosyl-(1-&gt;4)-N-acetyl-alpha-D-neuraminosyl](n) + n acetyl-CoA = [(2-&gt;6)-alpha-D-glucosyl-(1-&gt;4)-N,O(9)-diacetyl-alpha-D-neuraminosyl](n) + n CoA. Catalyzes the O-acetylation of capsular polymeric sialic acid consisting of polymers of (2-&gt;6)-alpha-D-glucosyl-(1-&gt;4)-N-acetyl-alpha-D-neuraminosyl residues. Shows high substrate specificity toward polymers of sialic acid that contains a large number of residues. The chain is Polysialic acid O-acetyltransferase from Neisseria meningitidis.